Here is a 452-residue protein sequence, read N- to C-terminus: Bifunctional F420 biosynthesis protein FbiB (452 aa).

Residues 1–248 (MVSAPGDHAG…AGEEDLFWLG (248 aa)) are coenzyme F420:L-glutamate ligase. GTP-binding positions include 24 to 27 (LPEF), serine 54, and lysine 59. Position 113 (aspartate 113) interacts with a divalent metal cation. Residue asparagine 116 participates in GTP binding. A divalent metal cation-binding residues include aspartate 154 and threonine 155. A dehydro-coenzyme F420-0 reductase region spans residues 249-452 (TAEAVERGRR…RDPGDGLVER (204 aa)). Residues 264–268 (RRSVR) and alanine 292 contribute to the FMN site. Aspartate 324 lines the coenzyme F420-(gamma-Glu)n pocket. FMN is bound by residues glycine 403 and arginine 440.

The protein in the N-terminal section; belongs to the CofE family. It depends on Mg(2+) as a cofactor. Requires Mn(2+) as cofactor. The cofactor is K(+).

It carries out the reaction oxidized coenzyme F420-0 + GTP + L-glutamate = oxidized coenzyme F420-1 + GDP + phosphate + H(+). The catalysed reaction is oxidized coenzyme F420-0 + FMN + H(+) = dehydro coenzyme F420-0 + FMNH2. It catalyses the reaction oxidized coenzyme F420-1 + GTP + L-glutamate = oxidized coenzyme F420-2 + GDP + phosphate + H(+). The protein operates within cofactor biosynthesis; coenzyme F420 biosynthesis. Functionally, bifunctional enzyme that catalyzes the GTP-dependent successive addition of two or more gamma-linked L-glutamates to the L-lactyl phosphodiester of 7,8-didemethyl-8-hydroxy-5-deazariboflavin (F420-0) to form polyglutamated F420 derivatives, and the FMNH2-dependent reduction of dehydro-F420-0 to form F420-0. The protein is Bifunctional F420 biosynthesis protein FbiB of Nocardia farcinica (strain IFM 10152).